The chain runs to 261 residues: Ribosomal RNA small subunit methyltransferase A (261 aa).

6 residues coordinate S-adenosyl-L-methionine: Asn-11, Leu-13, Gly-38, Glu-59, Asp-84, and Ser-106.

Belongs to the class I-like SAM-binding methyltransferase superfamily. rRNA adenine N(6)-methyltransferase family. RsmA subfamily.

The protein localises to the cytoplasm. It carries out the reaction adenosine(1518)/adenosine(1519) in 16S rRNA + 4 S-adenosyl-L-methionine = N(6)-dimethyladenosine(1518)/N(6)-dimethyladenosine(1519) in 16S rRNA + 4 S-adenosyl-L-homocysteine + 4 H(+). Specifically dimethylates two adjacent adenosines (A1518 and A1519) in the loop of a conserved hairpin near the 3'-end of 16S rRNA in the 30S particle. May play a critical role in biogenesis of 30S subunits. The protein is Ribosomal RNA small subunit methyltransferase A of Wigglesworthia glossinidia brevipalpis.